The following is a 607-amino-acid chain: Sulfite reductase [NADPH] flavoprotein alpha-component (607 aa).

Positions 66-204 (VTILYGSQTG…AAGQWHADVL (139 aa)) constitute a Flavodoxin-like domain. FMN-binding positions include 72 to 77 (SQTGNG), 119 to 122 (STHG), and 155 to 164 (LGDSSYEFFC). The FAD-binding FR-type domain occupies 239 to 456 (QNPYRAEVLV…VEPNKHFRLP (218 aa)). FAD contacts are provided by residues Thr-327, Leu-361, 395–398 (RLYS), 413–415 (TVA), and 428–431 (GGAS). Residues 527–528 (SR), 533–537 (KIYVQ), and Asp-569 each bind NADP(+). Residue Tyr-607 coordinates FAD.

It belongs to the NADPH-dependent sulphite reductase flavoprotein subunit CysJ family. This sequence in the N-terminal section; belongs to the flavodoxin family. In the C-terminal section; belongs to the flavoprotein pyridine nucleotide cytochrome reductase family. As to quaternary structure, alpha(8)-beta(8). The alpha component is a flavoprotein, the beta component is a hemoprotein. FAD is required as a cofactor. It depends on FMN as a cofactor.

The enzyme catalyses hydrogen sulfide + 3 NADP(+) + 3 H2O = sulfite + 3 NADPH + 4 H(+). Its pathway is sulfur metabolism; hydrogen sulfide biosynthesis; hydrogen sulfide from sulfite (NADPH route): step 1/1. Functionally, component of the sulfite reductase complex that catalyzes the 6-electron reduction of sulfite to sulfide. This is one of several activities required for the biosynthesis of L-cysteine from sulfate. The flavoprotein component catalyzes the electron flow from NADPH -&gt; FAD -&gt; FMN to the hemoprotein component. This chain is Sulfite reductase [NADPH] flavoprotein alpha-component, found in Shewanella oneidensis (strain ATCC 700550 / JCM 31522 / CIP 106686 / LMG 19005 / NCIMB 14063 / MR-1).